Consider the following 226-residue polypeptide: ATP synthase subunit a (226 aa).

The next 7 membrane-spanning stretches (helical) occupy residues 18-38 (FIIGFHTLLVAVILLILARYA), 44-64 (VVPSGIQNVFEFIISGIISFA), 79-99 (LAATIAFLVFFGNAIGIIPGF), 105-125 (SWSFTLVLALVVFFYYHFEGI), 137-157 (FMGPVWWLAPLMFPVEIISHF), 177-197 (FLLVMLMLAPWIVPVAPFAIL), and 202-222 (LLQAFVFMILTYVYIHGAVVV).

The protein belongs to the ATPase A chain family. In terms of assembly, F-type ATPases have 2 components, CF(1) - the catalytic core - and CF(0) - the membrane proton channel. CF(1) has five subunits: alpha(3), beta(3), gamma(1), delta(1), epsilon(1). CF(0) has three main subunits: a(1), b(2) and c(9-12). The alpha and beta chains form an alternating ring which encloses part of the gamma chain. CF(1) is attached to CF(0) by a central stalk formed by the gamma and epsilon chains, while a peripheral stalk is formed by the delta and b chains.

The protein localises to the cell inner membrane. Functionally, key component of the proton channel; it plays a direct role in the translocation of protons across the membrane. The chain is ATP synthase subunit a from Helicobacter hepaticus (strain ATCC 51449 / 3B1).